The primary structure comprises 160 residues: Small ribosomal subunit protein uS7A (160 aa).

The protein belongs to the universal ribosomal protein uS7 family. In terms of assembly, part of the 30S ribosomal subunit. Contacts proteins S9 and S11.

Its function is as follows. One of the primary rRNA binding proteins, it binds directly to 16S rRNA where it nucleates assembly of the head domain of the 30S subunit. Is located at the subunit interface close to the decoding center, probably blocks exit of the E-site tRNA. This chain is Small ribosomal subunit protein uS7A, found in Aquifex aeolicus (strain VF5).